Reading from the N-terminus, the 197-residue chain is SERTA domain-containing protein 3 (197 aa).

A disordered region spans residues 1-23; sequence MGGLKRKHSDLEEEEEEEKWDWS. Residues 27–74 form the SERTA domain; the sequence is LRSYQQALLRISLDKVQRSLGPRAPSLRRHVLIHNTLQQLQAAIRLAP.

Interacts with RPA2.

It is found in the nucleus. The protein localises to the nucleolus. Its function is as follows. Antiviral interferon-stimulated protein that plays a role in innate immunity and in the suppression of viruses through different mechanisms. Plays a role in the late phase response of TLR-induced immune effector expression. Strong transcriptional coactivator. This is SERTA domain-containing protein 3 (Sertad3) from Mus musculus (Mouse).